Consider the following 194-residue polypeptide: dITP/XTP pyrophosphatase (194 aa).

8 to 13 serves as a coordination point for substrate; that stretch reads TNNPHK. Asp69 functions as the Proton acceptor in the catalytic mechanism. Asp69 provides a ligand contact to Mg(2+). Residues Thr70, 150 to 153, Lys173, and 178 to 179 each bind substrate; these read FGYD and HR.

The protein belongs to the HAM1 NTPase family. As to quaternary structure, homodimer. It depends on Mg(2+) as a cofactor.

The catalysed reaction is XTP + H2O = XMP + diphosphate + H(+). The enzyme catalyses dITP + H2O = dIMP + diphosphate + H(+). It carries out the reaction ITP + H2O = IMP + diphosphate + H(+). Functionally, pyrophosphatase that catalyzes the hydrolysis of nucleoside triphosphates to their monophosphate derivatives, with a high preference for the non-canonical purine nucleotides XTP (xanthosine triphosphate), dITP (deoxyinosine triphosphate) and ITP. Seems to function as a house-cleaning enzyme that removes non-canonical purine nucleotides from the nucleotide pool, thus preventing their incorporation into DNA/RNA and avoiding chromosomal lesions. This is dITP/XTP pyrophosphatase from Porphyromonas gingivalis (strain ATCC BAA-308 / W83).